The chain runs to 450 residues: Signal recognition particle 54 kDa protein (450 aa).

GTP contacts are provided by residues G107–T114, D188–R192, and T247–D250.

It belongs to the GTP-binding SRP family. SRP54 subfamily. Part of the signal recognition particle protein translocation system, which is composed of SRP and FtsY. Archaeal SRP consists of a 7S RNA molecule of 300 nucleotides and two protein subunits: SRP54 and SRP19.

It localises to the cytoplasm. The enzyme catalyses GTP + H2O = GDP + phosphate + H(+). In terms of biological role, involved in targeting and insertion of nascent membrane proteins into the cytoplasmic membrane. Binds to the hydrophobic signal sequence of the ribosome-nascent chain (RNC) as it emerges from the ribosomes. The SRP-RNC complex is then targeted to the cytoplasmic membrane where it interacts with the SRP receptor FtsY. This Methanococcus vannielii (strain ATCC 35089 / DSM 1224 / JCM 13029 / OCM 148 / SB) protein is Signal recognition particle 54 kDa protein.